We begin with the raw amino-acid sequence, 363 residues long: Ribosomal RNA large subunit methyltransferase M (363 aa).

Residues Ser-190, 223 to 226, Asp-242, Asp-262, and Asp-279 contribute to the S-adenosyl-L-methionine site; that span reads CPGG. Lys-308 (proton acceptor) is an active-site residue.

This sequence belongs to the class I-like SAM-binding methyltransferase superfamily. RNA methyltransferase RlmE family. RlmM subfamily. In terms of assembly, monomer.

The protein localises to the cytoplasm. The catalysed reaction is cytidine(2498) in 23S rRNA + S-adenosyl-L-methionine = 2'-O-methylcytidine(2498) in 23S rRNA + S-adenosyl-L-homocysteine + H(+). Its function is as follows. Catalyzes the 2'-O-methylation at nucleotide C2498 in 23S rRNA. The chain is Ribosomal RNA large subunit methyltransferase M from Vibrio atlanticus (strain LGP32) (Vibrio splendidus (strain Mel32)).